A 187-amino-acid polypeptide reads, in one-letter code: Probable nicotinate-nucleotide adenylyltransferase (187 aa).

Belongs to the NadD family.

It carries out the reaction nicotinate beta-D-ribonucleotide + ATP + H(+) = deamido-NAD(+) + diphosphate. The protein operates within cofactor biosynthesis; NAD(+) biosynthesis; deamido-NAD(+) from nicotinate D-ribonucleotide: step 1/1. In terms of biological role, catalyzes the reversible adenylation of nicotinate mononucleotide (NaMN) to nicotinic acid adenine dinucleotide (NaAD). This is Probable nicotinate-nucleotide adenylyltransferase from Anaeromyxobacter dehalogenans (strain 2CP-C).